The following is a 490-amino-acid chain: Betaine aldehyde dehydrogenase (490 aa).

2 residues coordinate K(+): Ile-27 and Asp-93. 150 to 152 (GAW) contacts NAD(+). Residue Lys-162 is the Charge relay system of the active site. 176-179 (KPSE) is a binding site for NAD(+). Residue Val-180 participates in K(+) binding. 230–233 (GTTT) contacts NAD(+). Leu-246 contacts K(+). Glu-252 (proton acceptor) is an active-site residue. NAD(+) is bound by residues Gly-254, Cys-286, and Glu-387. Cys-286 acts as the Nucleophile in catalysis. Cys-286 carries the cysteine sulfenic acid (-SOH) modification. K(+) is bound by residues Lys-457 and Gly-460. The Charge relay system role is filled by Glu-464.

This sequence belongs to the aldehyde dehydrogenase family. Dimer of dimers. K(+) is required as a cofactor.

It catalyses the reaction betaine aldehyde + NAD(+) + H2O = glycine betaine + NADH + 2 H(+). It participates in amine and polyamine biosynthesis; betaine biosynthesis via choline pathway; betaine from betaine aldehyde: step 1/1. In terms of biological role, involved in the biosynthesis of the osmoprotectant glycine betaine. Catalyzes the irreversible oxidation of betaine aldehyde to the corresponding acid. This is Betaine aldehyde dehydrogenase from Pseudomonas entomophila (strain L48).